The primary structure comprises 330 residues: D-lactate dehydrogenase (330 aa).

Residues 156-157 (RI), Asp-176, 206-207 (VP), 233-235 (AAR), and Asp-259 each bind NAD(+). Arg-235 is an active-site residue. The active site involves Glu-264. The Proton donor role is filled by His-296.

This sequence belongs to the D-isomer specific 2-hydroxyacid dehydrogenase family.

The catalysed reaction is (R)-lactate + NAD(+) = pyruvate + NADH + H(+). This Staphylococcus aureus protein is D-lactate dehydrogenase (ldhD).